Reading from the N-terminus, the 81-residue chain is Bursicon (81 aa).

In terms of assembly, heterodimer of burs and pburs. In terms of tissue distribution, central nervous system. Coexpressed with CCAP in most CCAP-specific neurons. Coexpressed with pburs in the large bilateral lateral neurosecretory neurons of the first three unfused abdominal ganglia and in all anterior bilateral cell pairs in the thoracic ganglia.

The protein localises to the secreted. Final heterodimeric neurohormone released at the end of the molting cycle, involved in the sclerotization (tanning) of the insect cuticle, melanization and wing spreading. This Periplaneta americana (American cockroach) protein is Bursicon (burs).